The following is a 691-amino-acid chain: Elongation factor G (691 aa).

The tr-type G domain maps to 8–282 (EQTRNIGIMA…AVIDYLPAPT (275 aa)). GTP is bound by residues 17–24 (AHIDAGKT), 81–85 (DTPGH), and 135–138 (NKMD).

This sequence belongs to the TRAFAC class translation factor GTPase superfamily. Classic translation factor GTPase family. EF-G/EF-2 subfamily.

It is found in the cytoplasm. Its function is as follows. Catalyzes the GTP-dependent ribosomal translocation step during translation elongation. During this step, the ribosome changes from the pre-translocational (PRE) to the post-translocational (POST) state as the newly formed A-site-bound peptidyl-tRNA and P-site-bound deacylated tRNA move to the P and E sites, respectively. Catalyzes the coordinated movement of the two tRNA molecules, the mRNA and conformational changes in the ribosome. The polypeptide is Elongation factor G (Natranaerobius thermophilus (strain ATCC BAA-1301 / DSM 18059 / JW/NM-WN-LF)).